The primary structure comprises 1509 residues: DNA-directed RNA polymerase subunit beta' (1509 aa).

Positions 75, 77, 90, and 93 each coordinate Zn(2+). Residues Asp474, Asp476, and Asp478 each contribute to the Mg(2+) site. Positions 804, 878, 885, and 888 each coordinate Zn(2+).

It belongs to the RNA polymerase beta' chain family. In terms of assembly, the RNAP catalytic core consists of 2 alpha, 1 beta, 1 beta' and 1 omega subunit. When a sigma factor is associated with the core the holoenzyme is formed, which can initiate transcription. It depends on Mg(2+) as a cofactor. Zn(2+) serves as cofactor.

The enzyme catalyses RNA(n) + a ribonucleoside 5'-triphosphate = RNA(n+1) + diphosphate. Its function is as follows. DNA-dependent RNA polymerase catalyzes the transcription of DNA into RNA using the four ribonucleoside triphosphates as substrates. This Sulfurovum sp. (strain NBC37-1) protein is DNA-directed RNA polymerase subunit beta'.